A 333-amino-acid polypeptide reads, in one-letter code: Phosphate acyltransferase (333 aa).

The protein belongs to the PlsX family. In terms of assembly, homodimer. Probably interacts with PlsY.

It is found in the cytoplasm. It carries out the reaction a fatty acyl-[ACP] + phosphate = an acyl phosphate + holo-[ACP]. Its pathway is lipid metabolism; phospholipid metabolism. Functionally, catalyzes the reversible formation of acyl-phosphate (acyl-PO(4)) from acyl-[acyl-carrier-protein] (acyl-ACP). This enzyme utilizes acyl-ACP as fatty acyl donor, but not acyl-CoA. The polypeptide is Phosphate acyltransferase (Enterococcus faecalis (strain ATCC 700802 / V583)).